A 144-amino-acid chain; its full sequence is Sec-independent protein translocase protein TatB (144 aa).

Residues 1 to 21 (MFEIGFWELVLVAIIGIVVVG) traverse the membrane as a helical segment. The segment at 97–144 (KMIDEPPYQEPPPAAHSVQTDAEAYRDTGIEPADKSSSPEHHHDDAAR) is disordered. Residues 119–144 (EAYRDTGIEPADKSSSPEHHHDDAAR) are compositionally biased toward basic and acidic residues.

It belongs to the TatB family. The Tat system comprises two distinct complexes: a TatABC complex, containing multiple copies of TatA, TatB and TatC subunits, and a separate TatA complex, containing only TatA subunits. Substrates initially bind to the TatABC complex, which probably triggers association of the separate TatA complex to form the active translocon.

It is found in the cell inner membrane. Its function is as follows. Part of the twin-arginine translocation (Tat) system that transports large folded proteins containing a characteristic twin-arginine motif in their signal peptide across membranes. Together with TatC, TatB is part of a receptor directly interacting with Tat signal peptides. TatB may form an oligomeric binding site that transiently accommodates folded Tat precursor proteins before their translocation. The chain is Sec-independent protein translocase protein TatB from Dichelobacter nodosus (strain VCS1703A).